The primary structure comprises 98 residues: Lipolysis-activating peptide 1-alpha chain (98 aa).

An N-terminal signal peptide occupies residues 1–22; sequence MMKLVLFGIIVILFSMIGSIHG. The LCN-type CS-alpha/beta domain occupies 26-89; that stretch reads PGNYPLNTYG…IWDAVKRHCK (64 aa). Cystine bridges form between C40–C63, C49–C68, and C53–C70. The residue at position 96 (K96) is a Lysine amide.

It belongs to the long (3 C-C) scorpion toxin superfamily. Monomer (edited version) and heterodimer (non-edited version) of this alpha chain and a beta chain (AC B8XGZ8). Expressed by the venom gland.

The protein resides in the secreted. Its function is as follows. The heterodimer non-edited LVP1 induces lipolysis in rat adipocytes. Induction of lipolysis by LVP1 appears to be mediated through the beta-2 adrenergic receptor pathway (ADRB2). In terms of biological role, the edited BmKBTx-like, similar to beta-toxins, may modulate voltage-gated sodium channels (Nav) and may block voltage-gated potassium channels (Kv). The protein is Lipolysis-activating peptide 1-alpha chain of Buthus israelis (Israeli scorpion).